An 888-amino-acid polypeptide reads, in one-letter code: Leucine--tRNA ligase (888 aa).

The 'HIGH' region motif lies at 42-52 (PYPSGKLHMGH). Residues 640–644 (TMSKS) carry the 'KMSKS' region motif. Residue K643 coordinates ATP.

Belongs to the class-I aminoacyl-tRNA synthetase family.

Its subcellular location is the cytoplasm. It catalyses the reaction tRNA(Leu) + L-leucine + ATP = L-leucyl-tRNA(Leu) + AMP + diphosphate. The sequence is that of Leucine--tRNA ligase from Polaromonas naphthalenivorans (strain CJ2).